The following is a 342-amino-acid chain: Subtilisin-like serine protease Rho m 2.0101 (342 aa).

The propeptide at 1-30 is removed in mature form; the sequence is TMELLEDLIEQVRQLPMVNFIEKNSLVHAN. Positions 1–30 constitute an Inhibitor I9 domain; that stretch reads TMELLEDLIEQVRQLPMVNFIEKNSLVHAN. The region spanning 39–342 is the Peptidase S8 domain; the sequence is PWGLARISHR…GQNLTKFWGH (304 aa). Catalysis depends on charge relay system residues D75 and H107. N-linked (GlcNAc...) asparagine glycosylation is found at N137 and N171. S267 functions as the Charge relay system in the catalytic mechanism. An N-linked (GlcNAc...) asparagine glycan is attached at N335.

The protein belongs to the peptidase S8 family.

Serine protease. The polypeptide is Subtilisin-like serine protease Rho m 2.0101 (Rhodotorula mucilaginosa (Yeast)).